The sequence spans 295 residues: Transcription factor MYB34 (295 aa).

HTH myb-type domains are found at residues 9-61 (EEGI…ANYL) and 62-116 (RPDI…KKRL). DNA-binding regions (H-T-H motif) lie at residues 37–61 (WRTL…ANYL) and 89–112 (WAAI…NTNL).

In terms of assembly, can form complexes with MYC2, MYC3 or MYC4. As to expression, expressed in trichomes.

The protein localises to the nucleus. Its function is as follows. Transcription factor involved in tryptophan gene activation and in indole-3-acetic acid (IAA) and indolic glucosinolates (IG) biosynthesis. Acts as a direct transcriptional activator of both Trp synthesis genes and Trp secondary metabolism genes. In Arabidopsis thaliana (Mouse-ear cress), this protein is Transcription factor MYB34 (MYB34).